The sequence spans 236 residues: Peroxisomal membrane protein PMP27 (236 aa).

It belongs to the peroxin-11 family. As to quaternary structure, homooligomer. Interacts with PEX34.

It is found in the peroxisome membrane. Its function is as follows. Involved in peroxisomal proliferation. Promotes peroxisome division and biogenesis. The sequence is that of Peroxisomal membrane protein PMP27 (PEX11) from Saccharomyces cerevisiae (strain ATCC 204508 / S288c) (Baker's yeast).